The sequence spans 341 residues: tRNA N6-adenosine threonylcarbamoyltransferase (341 aa).

His-115 and His-119 together coordinate Fe cation. Substrate is bound by residues 138 to 142 (LVSGG), Asp-171, Gly-184, and Asn-276. Position 304 (Asp-304) interacts with Fe cation.

This sequence belongs to the KAE1 / TsaD family. It depends on Fe(2+) as a cofactor.

It is found in the cytoplasm. The enzyme catalyses L-threonylcarbamoyladenylate + adenosine(37) in tRNA = N(6)-L-threonylcarbamoyladenosine(37) in tRNA + AMP + H(+). In terms of biological role, required for the formation of a threonylcarbamoyl group on adenosine at position 37 (t(6)A37) in tRNAs that read codons beginning with adenine. Is involved in the transfer of the threonylcarbamoyl moiety of threonylcarbamoyl-AMP (TC-AMP) to the N6 group of A37, together with TsaE and TsaB. TsaD likely plays a direct catalytic role in this reaction. This Stenotrophomonas maltophilia (strain R551-3) protein is tRNA N6-adenosine threonylcarbamoyltransferase.